Here is a 243-residue protein sequence, read N- to C-terminus: Probable transcriptional regulatory protein BP2308 (243 aa).

The disordered stretch occupies residues 1 to 21 (MAGHSKWANIQHRKGRQDAKR).

Belongs to the TACO1 family.

It localises to the cytoplasm. The sequence is that of Probable transcriptional regulatory protein BP2308 from Bordetella pertussis (strain Tohama I / ATCC BAA-589 / NCTC 13251).